A 941-amino-acid chain; its full sequence is Lysine-specific demethylase 7A (941 aa).

The segment at 37 to 88 (PVYCVCRQPYDVNRFMIECDICKDWFHGSCVGVEEHHAVDIDLYHCPNCAVL) adopts a PHD-type zinc-finger fold. The segment at 97–114 (RRNWHRHDYTEIDDGSKP) is linker. Residues 230-386 (FSDTKMSELV…MQLRCYEMEK (157 aa)) form the JmjC domain. Thr-279 contacts substrate. Residues His-282 and Asp-284 each contribute to the Fe cation site. Residue Lys-299 coordinates substrate. Fe cation is bound at residue His-354. 3 disordered regions span residues 597–633 (QSLY…EHEE), 677–700 (TTEE…KEES), and 819–921 (QDLS…MATA). Residue Ser-604 is modified to Phosphoserine. 2 stretches are compositionally biased toward basic and acidic residues: residues 618 to 633 (MKIE…EHEE) and 685 to 700 (GDEK…KEES). Polar residues predominate over residues 834-876 (SEISQRVQSRNYVDSSGSSLQNGKYMQNSNLTSGACQISNGSL).

It belongs to the JHDM1 histone demethylase family. JHDM1D subfamily. It depends on Fe(2+) as a cofactor.

The protein localises to the nucleus. The enzyme catalyses N(6),N(6)-dimethyl-L-lysyl(9)-[histone H3] + 2 2-oxoglutarate + 2 O2 = L-lysyl(9)-[histone H3] + 2 formaldehyde + 2 succinate + 2 CO2. The catalysed reaction is N(6),N(6)-dimethyl-L-lysyl(27)-[histone H3] + 2 2-oxoglutarate + 2 O2 = L-lysyl(27)-[histone H3] + 2 formaldehyde + 2 succinate + 2 CO2. It carries out the reaction N(6),N(6)-dimethyl-L-lysyl(36)-[histone H3] + 2-oxoglutarate + O2 = N(6)-methyl-L-lysyl(36)-[histone H3] + formaldehyde + succinate + CO2. It catalyses the reaction N(6)-methyl-L-lysyl(20)-[histone H4] + 2-oxoglutarate + O2 = L-lysyl(20)-[histone H4] + formaldehyde + succinate + CO2. In terms of biological role, histone demethylase required for brain development. Specifically demethylates dimethylated 'Lys-9', 'Lys-27' and 'Lys-36' (H3K9me2, H3K27me2, H3K36me2, respectively) of histone H3 and monomethylated histone H4 'Lys-20' residue (H4K20Me1), thereby playing a central role in histone code. Specifically binds trimethylated 'Lys-4' of histone H3 (H3K4me3), affecting histone demethylase specificity: in presence of H3K4me3, it has no demethylase activity toward H3K9me2, while it has high activity toward H3K27me2. Demethylates H3K9me2 in absence of H3K4me3. Has activity toward H4K20Me1 only when nucleosome is used as a substrate and when not histone octamer is used as substrate. The sequence is that of Lysine-specific demethylase 7A (KDM7A) from Homo sapiens (Human).